The sequence spans 443 residues: Tubulin beta chain (443 aa).

Gln11, Glu69, Ser138, Gly142, Thr143, Gly144, Asn204, and Asn226 together coordinate GTP. Glu69 is a binding site for Mg(2+). Residues 424-443 (QYQDATAEEEGEFEEEEGEN) are disordered. Residues 429–443 (TAEEEGEFEEEEGEN) are compositionally biased toward acidic residues.

It belongs to the tubulin family. As to quaternary structure, dimer of alpha and beta chains. A typical microtubule is a hollow water-filled tube with an outer diameter of 25 nm and an inner diameter of 15 nM. Alpha-beta heterodimers associate head-to-tail to form protofilaments running lengthwise along the microtubule wall with the beta-tubulin subunit facing the microtubule plus end conferring a structural polarity. Microtubules usually have 13 protofilaments but different protofilament numbers can be found in some organisms and specialized cells. It depends on Mg(2+) as a cofactor.

The protein localises to the cytoplasm. It localises to the cytoskeleton. Tubulin is the major constituent of microtubules, a cylinder consisting of laterally associated linear protofilaments composed of alpha- and beta-tubulin heterodimers. Microtubules grow by the addition of GTP-tubulin dimers to the microtubule end, where a stabilizing cap forms. Below the cap, tubulin dimers are in GDP-bound state, owing to GTPase activity of alpha-tubulin. The protein is Tubulin beta chain (BETA-TT1) of Tetrahymena pyriformis.